Reading from the N-terminus, the 288-residue chain is Urease accessory protein UreD (288 aa).

The protein belongs to the UreD family. UreD, UreF and UreG form a complex that acts as a GTP-hydrolysis-dependent molecular chaperone, activating the urease apoprotein by helping to assemble the nickel containing metallocenter of UreC. The UreE protein probably delivers the nickel.

It is found in the cytoplasm. Required for maturation of urease via the functional incorporation of the urease nickel metallocenter. The polypeptide is Urease accessory protein UreD (Dechloromonas aromatica (strain RCB)).